Here is a 707-residue protein sequence, read N- to C-terminus: Elongation factor G (707 aa).

Positions 8–294 (ERYRNFGIIA…GVVDYLPSPL (287 aa)) constitute a tr-type G domain. GTP is bound by residues 17 to 24 (AHIDAGKT), 92 to 96 (DTPGH), and 146 to 149 (NKMD).

It belongs to the TRAFAC class translation factor GTPase superfamily. Classic translation factor GTPase family. EF-G/EF-2 subfamily.

Its subcellular location is the cytoplasm. Catalyzes the GTP-dependent ribosomal translocation step during translation elongation. During this step, the ribosome changes from the pre-translocational (PRE) to the post-translocational (POST) state as the newly formed A-site-bound peptidyl-tRNA and P-site-bound deacylated tRNA move to the P and E sites, respectively. Catalyzes the coordinated movement of the two tRNA molecules, the mRNA and conformational changes in the ribosome. In Hyphomonas neptunium (strain ATCC 15444), this protein is Elongation factor G.